Here is a 1200-residue protein sequence, read N- to C-terminus: Hyalin (1200 aa).

15 HYR domains span residues 1 to 39, 40 to 123, 124 to 207, 208 to 292, 293 to 376, 377 to 460, 461 to 544, 546 to 629, 630 to 713, 714 to 797, 798 to 881, 882 to 966, 967 to 1050, 1051 to 1133, and 1134 to 1200; these read SSHN…TVTA, TDTT…NVIE, VDTT…NVIE, VDTT…NVVE, VDTT…TVEE, VDTT…TVIA, VDTT…TISA, VDTT…VINA, VDTT…TIGT, VDTM…TVFA, VDTT…TVTA, QDTT…TVNT, and QDTT…FFSD.

In terms of assembly, homooligomer in presence of calcium. In terms of processing, glycosylated.

It is found in the secreted. It localises to the extracellular space. The protein resides in the extracellular matrix. In terms of biological role, major constituent of the hyaline layer. The hyaline layer of echinoderm embryos is an extraembryonic matrix that functions as a substrate for cell adhesion through early development. The sequence is that of Hyalin from Strongylocentrotus purpuratus (Purple sea urchin).